The chain runs to 54 residues: Large ribosomal subunit protein bL33 (54 aa).

It belongs to the bacterial ribosomal protein bL33 family.

This chain is Large ribosomal subunit protein bL33, found in Caldicellulosiruptor saccharolyticus (strain ATCC 43494 / DSM 8903 / Tp8T 6331).